The chain runs to 342 residues: MVSVKKIVASALVGVLMFSAVGCNMVEKTQAAIDKTTVATVNGEKITLGEVDSHLKGVFAQMKSQYGDKYMDDPQVAQQILQQRQSVVQGLVTDKVLGIEADKLGIKPSEEEIKKKVDEQFENIKKGMGDNFDKALEAEGYTEDTFKDVIKNQVINQAVQDYIIKDVKVTDEDAQKYYDENKQQFVAKDSGVLTKHLLFENEEEAQKAYDEIQSGKTTFNDLFTKYQNNKSENKKPIAENLGVVPAENSGLVQEFVDGLKPLKEGEISKPIKTQFGYHIIQAGATYEKGAQLPFDEVKSQIIQILKQQKDSEKFKADMDQWKKDLNVKVYDDKLQEGLKISK.

The first 22 residues, 1–22 (MVSVKKIVASALVGVLMFSAVG), serve as a signal peptide directing secretion. Residue cysteine 23 is the site of N-palmitoyl cysteine attachment. Residue cysteine 23 is the site of S-diacylglycerol cysteine attachment. Positions 189-284 (DSGVLTKHLL…FGYHIIQAGA (96 aa)) constitute a PpiC domain.

It belongs to the PrsA family.

The protein localises to the cell membrane. It catalyses the reaction [protein]-peptidylproline (omega=180) = [protein]-peptidylproline (omega=0). In terms of biological role, plays a major role in protein secretion by helping the post-translocational extracellular folding of several secreted proteins. The chain is Foldase protein PrsA from Clostridium perfringens (strain 13 / Type A).